The primary structure comprises 475 residues: Ribulose bisphosphate carboxylase large chain (475 aa).

Residues 1–2 constitute a propeptide that is removed on maturation; sequence MS. The residue at position 3 (Pro3) is an N-acetylproline. Position 14 is an N6,N6,N6-trimethyllysine (Lys14). Substrate is bound by residues Asn123 and Thr173. The active-site Proton acceptor is Lys175. A substrate-binding site is contributed by Lys177. Mg(2+) contacts are provided by Lys201, Asp203, and Glu204. Position 201 is an N6-carboxylysine (Lys201). Residue His294 is the Proton acceptor of the active site. Positions 295, 327, and 379 each coordinate substrate.

It belongs to the RuBisCO large chain family. Type I subfamily. As to quaternary structure, heterohexadecamer of 8 large chains and 8 small chains. Mg(2+) is required as a cofactor.

The protein resides in the plastid. The protein localises to the chloroplast. It catalyses the reaction 2 (2R)-3-phosphoglycerate + 2 H(+) = D-ribulose 1,5-bisphosphate + CO2 + H2O. It carries out the reaction D-ribulose 1,5-bisphosphate + O2 = 2-phosphoglycolate + (2R)-3-phosphoglycerate + 2 H(+). Its function is as follows. RuBisCO catalyzes two reactions: the carboxylation of D-ribulose 1,5-bisphosphate, the primary event in carbon dioxide fixation, as well as the oxidative fragmentation of the pentose substrate in the photorespiration process. Both reactions occur simultaneously and in competition at the same active site. The chain is Ribulose bisphosphate carboxylase large chain from Bazzania trilobata (Greater whipwort).